Reading from the N-terminus, the 122-residue chain is Large ribosomal subunit protein uL14 (122 aa).

The protein belongs to the universal ribosomal protein uL14 family. As to quaternary structure, part of the 50S ribosomal subunit. Forms a cluster with proteins L3 and L19. In the 70S ribosome, L14 and L19 interact and together make contacts with the 16S rRNA in bridges B5 and B8.

Its function is as follows. Binds to 23S rRNA. Forms part of two intersubunit bridges in the 70S ribosome. In Caulobacter vibrioides (strain ATCC 19089 / CIP 103742 / CB 15) (Caulobacter crescentus), this protein is Large ribosomal subunit protein uL14.